A 329-amino-acid polypeptide reads, in one-letter code: Probable tyrosine--tRNA ligase, cytoplasmic (329 aa).

Tyr-35 serves as a coordination point for L-tyrosine. Residues 40–48 carry the 'HIGH' region motif; it reads TTGKPHIAY. Tyr-162, Gln-166, Asp-169, and Gln-184 together coordinate L-tyrosine. The 'KMSKS' region signature appears at 218 to 222; that stretch reads KMSSS.

Belongs to the class-I aminoacyl-tRNA synthetase family. Homodimer.

It is found in the cytoplasm. It carries out the reaction tRNA(Tyr) + L-tyrosine + ATP = L-tyrosyl-tRNA(Tyr) + AMP + diphosphate + H(+). This chain is Probable tyrosine--tRNA ligase, cytoplasmic, found in Vairimorpha ceranae (strain BRL01) (Microsporidian parasite).